The following is a 540-amino-acid chain: Bifunctional purine biosynthesis protein PurH (540 aa).

One can recognise an MGS-like domain in the interval 1-144 (MKRALISVYD…KNYQDVGVVV (144 aa)). Positions 204–224 (ETAPERPIGADPGPQKPAAPS) are disordered.

The protein belongs to the PurH family.

It catalyses the reaction (6R)-10-formyltetrahydrofolate + 5-amino-1-(5-phospho-beta-D-ribosyl)imidazole-4-carboxamide = 5-formamido-1-(5-phospho-D-ribosyl)imidazole-4-carboxamide + (6S)-5,6,7,8-tetrahydrofolate. The enzyme catalyses IMP + H2O = 5-formamido-1-(5-phospho-D-ribosyl)imidazole-4-carboxamide. Its pathway is purine metabolism; IMP biosynthesis via de novo pathway; 5-formamido-1-(5-phospho-D-ribosyl)imidazole-4-carboxamide from 5-amino-1-(5-phospho-D-ribosyl)imidazole-4-carboxamide (10-formyl THF route): step 1/1. It participates in purine metabolism; IMP biosynthesis via de novo pathway; IMP from 5-formamido-1-(5-phospho-D-ribosyl)imidazole-4-carboxamide: step 1/1. The chain is Bifunctional purine biosynthesis protein PurH from Symbiobacterium thermophilum (strain DSM 24528 / JCM 14929 / IAM 14863 / T).